The sequence spans 630 residues: Alpha-1,4-glucan:maltose-1-phosphate maltosyltransferase (630 aa).

Residues Arg234, Gln294, and Asp329 each contribute to the alpha-maltose 1-phosphate site. The Nucleophile role is filled by Asp365. Alpha-maltose 1-phosphate is bound at residue Asn366. The active-site Proton donor is Glu394. Residue 504–505 (KY) participates in alpha-maltose 1-phosphate binding.

Belongs to the glycosyl hydrolase 13 family. GlgE subfamily. In terms of assembly, homodimer.

It carries out the reaction alpha-maltose 1-phosphate + [(1-&gt;4)-alpha-D-glucosyl](n) = [(1-&gt;4)-alpha-D-glucosyl](n+2) + phosphate. Functionally, maltosyltransferase that uses maltose 1-phosphate (M1P) as the sugar donor to elongate linear or branched alpha-(1-&gt;4)-glucans. Is involved in a branched alpha-glucan biosynthetic pathway from trehalose, together with TreS, Mak and GlgB. In Picrophilus torridus (strain ATCC 700027 / DSM 9790 / JCM 10055 / NBRC 100828 / KAW 2/3), this protein is Alpha-1,4-glucan:maltose-1-phosphate maltosyltransferase.